The primary structure comprises 88 residues: Conotoxin VxVIB (88 aa).

Positions 1-22 are cleaved as a signal peptide; that stretch reads MNLACVLIVAVLFLTASQLATA. Positions 23-52 are excised as a propeptide; sequence ASYARDKQEYPAVRSSDEMQDSEDLTLTKE. Intrachain disulfides connect cysteine 53–cysteine 68, cysteine 60–cysteine 72, and cysteine 67–cysteine 81.

Expressed by the venom duct.

It is found in the secreted. May act as a neurotoxin, but produces no obvious effect on ionic currents when tested on the mouse dorsal rooted ganglia (DRG). The sequence is that of Conotoxin VxVIB from Conus vexillum (Flag cone).